A 143-amino-acid chain; its full sequence is Large ribosomal subunit protein uL15 (143 aa).

Residues 1 to 48 (MRLNTISPSKGAKHSSKRLGRGIGSGLGKTSGRGHKGQKARSGCSIHR) are disordered. Residues 11-20 (GAKHSSKRLG) show a composition bias toward basic residues. Positions 21 to 31 (RGIGSGLGKTS) are enriched in gly residues.

Belongs to the universal ribosomal protein uL15 family. In terms of assembly, part of the 50S ribosomal subunit.

In terms of biological role, binds to the 23S rRNA. This chain is Large ribosomal subunit protein uL15, found in Baumannia cicadellinicola subsp. Homalodisca coagulata.